Here is a 1135-residue protein sequence, read N- to C-terminus: Envelopment polyprotein (1135 aa).

A signal peptide spans 1-35 (MRILKLLELVVKVSLFTIALSSVLLAFLIFRATDA). Residues 36–314 (KVEIIRGDHP…KYSKSIYKQT (279 aa)) are Lumenal-facing. The Cell attachment site signature appears at 41 to 43 (RGD). 2 disulfides stabilise this stretch: Cys114–Cys145 and Cys122–Cys156. Asn116 carries N-linked (GlcNAc...) asparagine; by host glycosylation. Positions 177–195 (LDNKRHFSVGTKFFISESL) are non-covalent dimerization. Residue Asn210 is glycosylated (N-linked (GlcNAc...) asparagine; by host). A disulfide bridge links Cys224 with Cys285. A helical membrane pass occupies residues 315–366 (ACINFSWIRLILIALLIYFPIRWLVNKTTKPLFLWYDLIGLITYPILLLINC). Over 367–484 (LWKYFPFKCS…VPGCPFLVTS (118 aa)) the chain is Cytoplasmic. The segment at 437-484 (LSFSLLKFVTEILIGLIILSQMPMSMAQTTQCLSGCFYVPGCPFLVTS) is signal for signal peptide peptidase. The Lumenal segment spans residues 485 to 1067 (KFEKCPERDQ…YFGSFFDTIR (583 aa)). N-linked (GlcNAc...) asparagine; by host glycans are attached at residues Asn588, Asn605, and Asn980. Residues 1068–1088 (VILLIAFIFLVIYFCSILTTI) form a helical membrane-spanning segment. Residues 1089-1135 (CKGYVKNESYKSRSKIEDDDDSEIKAPMLMKDTMTRRRPPMDFSHLV) lie on the Cytoplasmic side of the membrane.

This sequence belongs to the tospovirus envelope glycoprotein family. As to quaternary structure, homodimer; disulfide-linked. Heterodimer with Glycoprotein C. Interacts with nucleoprotein. Heterodimer with Glycoprotein N. Interacts with nucleoprotein. In terms of processing, specific enzymatic cleavages in vivo yield mature proteins including Glycoprotein N and Glycoprotein C. Glycosylated with O-linked glycans. Glycosylation is essential for proper subcellular location. Post-translationally, cleaved at acidic pH.

The protein resides in the virion membrane. It localises to the host Golgi apparatus membrane. The protein localises to the host endoplasmic reticulum membrane. Functionally, forms the spikes present at the surface of the virion together with Glycoprotein C. They are able to attach the virion to a cell receptor and to promote fusion of membranes after endocytosis of the virion. Plays a role in virus binding and/or entry into the vector midgut. Forms the spikes present at the surface of the virion together with Glycoprotein N. They are able to attach the virion to a cell receptor and to promote fusion of membranes after endocytosis of the virion. Probable class II fusion protein. This Tomato spotted wilt virus (strain Regular2A) (TSWV) protein is Envelopment polyprotein (GP).